We begin with the raw amino-acid sequence, 219 residues long: Protein ERP1 (219 aa).

The signal sequence occupies residues 1 to 22 (MLLTSLLQVFACCLVLPAQVTA). Over 23-186 (FYYYTSGAER…RDASEAVNSR (164 aa)) the chain is Lumenal. The region spanning 32 to 131 (RKCFHKELSK…KTKIDVEFQV (100 aa)) is the GOLD domain. The helical transmembrane segment at 187 to 207 (AMWWIVIQLIVLAVTCGWQMK) threads the bilayer. Over 208–219 (HLGKFFVKQKIL) the chain is Cytoplasmic.

This sequence belongs to the EMP24/GP25L family. In terms of assembly, associates with EMP24, ERV25 and ERP2.

Its subcellular location is the endoplasmic reticulum membrane. Its function is as follows. Involved in vesicular protein trafficking. This Saccharomyces cerevisiae (strain ATCC 204508 / S288c) (Baker's yeast) protein is Protein ERP1 (ERP1).